Here is a 669-residue protein sequence, read N- to C-terminus: UvrABC system protein B (669 aa).

Residues 26 to 183 (EGLEDGLAHQ…RRLADLQYTR (158 aa)) form the Helicase ATP-binding domain. ATP is bound at residue 39-46 (GVTGSGKT). The short motif at 92–115 (YYDYYQPEAYVPSSDTFIEKDASV) is the Beta-hairpin element. The region spanning 431–593 (QVDDLLSEIR…IVPKGLNKKI (163 aa)) is the Helicase C-terminal domain. Residues 629-664 (EKEIQRLETEMYQHAKDLEFEKAAQTRDKLQTLRAQ) enclose the UVR domain.

The protein belongs to the UvrB family. Forms a heterotetramer with UvrA during the search for lesions. Interacts with UvrC in an incision complex.

It localises to the cytoplasm. Functionally, the UvrABC repair system catalyzes the recognition and processing of DNA lesions. A damage recognition complex composed of 2 UvrA and 2 UvrB subunits scans DNA for abnormalities. Upon binding of the UvrA(2)B(2) complex to a putative damaged site, the DNA wraps around one UvrB monomer. DNA wrap is dependent on ATP binding by UvrB and probably causes local melting of the DNA helix, facilitating insertion of UvrB beta-hairpin between the DNA strands. Then UvrB probes one DNA strand for the presence of a lesion. If a lesion is found the UvrA subunits dissociate and the UvrB-DNA preincision complex is formed. This complex is subsequently bound by UvrC and the second UvrB is released. If no lesion is found, the DNA wraps around the other UvrB subunit that will check the other stand for damage. The protein is UvrABC system protein B of Proteus mirabilis (strain HI4320).